The sequence spans 815 residues: Serotype-specific mannosyltransferase WbdA (815 aa).

The interval methionine 1–glutamate 374 is alpha-(1-&gt;2)-mannosyltransferase. The segment at lysine 431 to lysine 804 is alpha-(1-&gt;3)-mannosyltransferase.

It belongs to the glycosyltransferase group 1 family. Glycosyltransferase 4 subfamily. As to quaternary structure, monomer. Interacts with the C-terminal region of WbdD.

The protein localises to the cell inner membrane. The catalysed reaction is [alpha-D-Man-(1-&gt;3)-alpha-D-Man-(1-&gt;3)-alpha-D-Man-(1-&gt;2)-alpha-D-Man-(1-&gt;2)](n)-alpha-D-Man-(1-&gt;3)-alpha-D-Man-(1-&gt;3)-alpha-D-Man-(1-&gt;3)-alpha-D-GlcNAc-di-trans,octa-cis-undecaprenyl diphosphate + 2 GDP-alpha-D-mannose = alpha-D-Man-(1-&gt;2)-alpha-D-Man-(1-&gt;2)-[alpha-D-Man-(1-&gt;3)-alpha-D-Man-(1-&gt;3)-alpha-D-Man-(1-&gt;2)-alpha-D-Man-(1-&gt;2)](n)-alpha-D-Man-(1-&gt;3)-alpha-D-Man-(1-&gt;3)-alpha-D-Man-(1-&gt;3)-alpha-D-GlcNAc-di-trans,octa-cis-undecaprenyl diphosphate + 2 GDP + 2 H(+). It carries out the reaction alpha-D-Man-(1-&gt;2)-alpha-D-Man-(1-&gt;2)-[alpha-D-Man-(1-&gt;3)-alpha-D-Man-(1-&gt;3)-alpha-D-Man-(1-&gt;2)-alpha-D-Man-(1-&gt;2)](n)-alpha-D-Man-(1-&gt;3)-alpha-D-Man-(1-&gt;3)-alpha-D-Man-(1-&gt;3)-alpha-D-GlcNAc-di-trans,octa-cis-undecaprenyl diphosphate + 2 GDP-alpha-D-mannose = [alpha-D-Man-(1-&gt;3)-alpha-D-Man-(1-&gt;3)-alpha-D-Man-(1-&gt;2)-alpha-D-Man-(1-&gt;2)](n+1)-alpha-D-Man-(1-&gt;3)-alpha-D-Man-(1-&gt;3)-alpha-D-Man-(1-&gt;3)-alpha-D-GlcNAc-di-trans,octa-cis-undecaprenyl diphosphate + 2 GDP + 2 H(+). The protein operates within bacterial outer membrane biogenesis; LPS O-antigen biosynthesis. In terms of biological role, mannosyltransferase involved in the biosynthesis of the repeat unit of the lipopolysaccharide (LPS) O-antigen region. Catalyzes the polymerization of a tetrasaccharide repeat unit containing two alpha-(1-&gt;3)- and two alpha-(1-&gt;2)-linked mannopyranose residues. In Escherichia coli, this protein is Serotype-specific mannosyltransferase WbdA.